The following is a 211-amino-acid chain: uncharacterized protein (211 aa).

Belongs to the A.longa ORF167/ORF288 family.

It localises to the plastid. This is an uncharacterized protein from Euglena longa (Euglenophycean alga).